We begin with the raw amino-acid sequence, 127 residues long: Large ribosomal subunit protein bL17 (127 aa).

The protein belongs to the bacterial ribosomal protein bL17 family. In terms of assembly, part of the 50S ribosomal subunit. Contacts protein L32.

The protein is Large ribosomal subunit protein bL17 of Xanthomonas euvesicatoria pv. vesicatoria (strain 85-10) (Xanthomonas campestris pv. vesicatoria).